The sequence spans 160 residues: Ribosomal RNA large subunit methyltransferase H (160 aa).

S-adenosyl-L-methionine contacts are provided by Leu-76 and Gly-108.

The protein belongs to the RNA methyltransferase RlmH family. Homodimer.

Its subcellular location is the cytoplasm. The catalysed reaction is pseudouridine(1915) in 23S rRNA + S-adenosyl-L-methionine = N(3)-methylpseudouridine(1915) in 23S rRNA + S-adenosyl-L-homocysteine + H(+). Functionally, specifically methylates the pseudouridine at position 1915 (m3Psi1915) in 23S rRNA. This chain is Ribosomal RNA large subunit methyltransferase H, found in Bradyrhizobium diazoefficiens (strain JCM 10833 / BCRC 13528 / IAM 13628 / NBRC 14792 / USDA 110).